A 184-amino-acid polypeptide reads, in one-letter code: ATP synthase subunit delta (184 aa).

The protein belongs to the ATPase delta chain family. In terms of assembly, F-type ATPases have 2 components, F(1) - the catalytic core - and F(0) - the membrane proton channel. F(1) has five subunits: alpha(3), beta(3), gamma(1), delta(1), epsilon(1). F(0) has three main subunits: a(1), b(2) and c(10-14). The alpha and beta chains form an alternating ring which encloses part of the gamma chain. F(1) is attached to F(0) by a central stalk formed by the gamma and epsilon chains, while a peripheral stalk is formed by the delta and b chains.

It is found in the cell inner membrane. F(1)F(0) ATP synthase produces ATP from ADP in the presence of a proton or sodium gradient. F-type ATPases consist of two structural domains, F(1) containing the extramembraneous catalytic core and F(0) containing the membrane proton channel, linked together by a central stalk and a peripheral stalk. During catalysis, ATP synthesis in the catalytic domain of F(1) is coupled via a rotary mechanism of the central stalk subunits to proton translocation. Its function is as follows. This protein is part of the stalk that links CF(0) to CF(1). It either transmits conformational changes from CF(0) to CF(1) or is implicated in proton conduction. This is ATP synthase subunit delta from Phenylobacterium zucineum (strain HLK1).